A 210-amino-acid chain; its full sequence is Kalata-B2 (210 aa).

Residues 1-22 form the signal peptide; it reads MAKFTNCLVLSLLLAAFVGAFG. Residues 23–66 constitute a propeptide that is removed on maturation; that stretch reads AEFSEADKATLVNDIAENIQKEILGEVKTSETVLTMFLKEMQLK. Positions 67–95 form a cross-link, cyclopeptide (Gly-Asp); that stretch reads GLPVCGETCFGGTCNTPGCSCTWPICTRD. Cystine bridges form between Cys-71–Cys-85, Cys-75–Cys-87, and Cys-80–Cys-92. Residues 96-120 constitute a propeptide that is removed on maturation; it reads SLPMRAGGKTSETTLHMFLKEMQLK. Positions 121–149 form a cross-link, cyclopeptide (Gly-Asp); the sequence is GLPVCGETCFGGTCNTPGCSCTWPICTRD. Intrachain disulfides connect Cys-125-Cys-139, Cys-129-Cys-141, and Cys-134-Cys-146. The propeptide occupies 150–174; it reads SLPMSAGGKTSETTLHMFLKEMQLK. Residues 175 to 203 constitute a cross-link (cyclopeptide (Gly-Asp)); the sequence is GLPVCGETCFGGTCNTPGCSCTWPICTRD. Disulfide bonds link Cys-179/Cys-193, Cys-183/Cys-195, and Cys-188/Cys-200. The propeptide occupies 204–210; sequence SLPLVAA.

It belongs to the cyclotide family. Moebius subfamily. Post-translationally, kalata-B2 is a cyclic peptide which occurs in three forms: with unmodified Trp, with Trp oxidized to form N-formylkynurenine and with Trp oxidized to form kynurenine. Oxidation is enhanced by exposure to sunlight.

Functionally, probably participates in a plant defense mechanism. Inhibitory effect on the growth and development of larvae from Helicoverpa punctigera. Has hemolytic activity. The protein is Kalata-B2 (OAK4) of Oldenlandia affinis.